The primary structure comprises 534 residues: Peptide chain release factor 3 (534 aa).

The region spanning 9-278 (ARRRTFAIIS…FFVEHAPPPQ (270 aa)) is the tr-type G domain. GTP contacts are provided by residues 18–25 (SHPDAGKT), 86–90 (DTPGH), and 140–143 (NKLD).

It belongs to the TRAFAC class translation factor GTPase superfamily. Classic translation factor GTPase family. PrfC subfamily.

The protein resides in the cytoplasm. Increases the formation of ribosomal termination complexes and stimulates activities of RF-1 and RF-2. It binds guanine nucleotides and has strong preference for UGA stop codons. It may interact directly with the ribosome. The stimulation of RF-1 and RF-2 is significantly reduced by GTP and GDP, but not by GMP. In Xanthomonas campestris pv. campestris (strain 8004), this protein is Peptide chain release factor 3.